The sequence spans 412 residues: CCA-adding enzyme (412 aa).

Residues Ser-41 and Lys-44 each coordinate ATP. The CTP site is built by Ser-41 and Lys-44. The Mg(2+) site is built by Asp-53, Asp-55, and Asp-106. ATP-binding residues include His-129, Lys-149, and Tyr-158. Positions 129, 149, and 158 each coordinate CTP.

Belongs to the tRNA nucleotidyltransferase/poly(A) polymerase family. Archaeal CCA-adding enzyme subfamily. In terms of assembly, homodimer. It depends on Mg(2+) as a cofactor.

The catalysed reaction is a tRNA precursor + 2 CTP + ATP = a tRNA with a 3' CCA end + 3 diphosphate. The enzyme catalyses a tRNA with a 3' CCA end + 2 CTP + ATP = a tRNA with a 3' CCACCA end + 3 diphosphate. Catalyzes the addition and repair of the essential 3'-terminal CCA sequence in tRNAs without using a nucleic acid template. Adds these three nucleotides in the order of C, C, and A to the tRNA nucleotide-73, using CTP and ATP as substrates and producing inorganic pyrophosphate. tRNA 3'-terminal CCA addition is required both for tRNA processing and repair. Also involved in tRNA surveillance by mediating tandem CCA addition to generate a CCACCA at the 3' terminus of unstable tRNAs. While stable tRNAs receive only 3'-terminal CCA, unstable tRNAs are marked with CCACCA and rapidly degraded. The protein is CCA-adding enzyme of Saccharolobus islandicus (strain Y.G.57.14 / Yellowstone #1) (Sulfolobus islandicus).